Reading from the N-terminus, the 137-residue chain is uncharacterized protein (137 aa).

This is an uncharacterized protein from Frog virus 3 (isolate Goorha) (FV-3).